Consider the following 62-residue polypeptide: Cytochrome b-c1 complex subunit 6-2, mitochondrial (62 aa).

2 cysteine pairs are disulfide-bonded: C17-C59 and C31-C45.

This sequence belongs to the UQCRH/QCR6 family. Component of the ubiquinol-cytochrome c oxidoreductase (cytochrome b-c1 complex, complex III, CIII), a multisubunit enzyme composed of 10 subunits. The complex is composed of 3 respiratory subunits cytochrome b (MT-CYB), cytochrome c1 (CYC1-1 or CYC1-2) and Rieske protein (UCR1-1 or UCR1-2), 2 core protein subunits MPPalpha1 (or MPPalpha2) and MPPB, and 5 low-molecular weight protein subunits QCR7-1 (or QCR7-2), UCRQ-1 (or UCRQ-2), QCR9, UCRY and probably QCR6-1 (or QCR6-2). The complex exists as an obligatory dimer and forms supercomplexes (SCs) in the inner mitochondrial membrane with NADH-ubiquinone oxidoreductase (complex I, CI), resulting in different assemblies (supercomplexes SCI(1)III(2) and SCI(2)III(4)).

It localises to the mitochondrion inner membrane. In terms of biological role, component of the ubiquinol-cytochrome c oxidoreductase, a multisubunit transmembrane complex that is part of the mitochondrial electron transport chain which drives oxidative phosphorylation. The respiratory chain contains 3 multisubunit complexes succinate dehydrogenase (complex II, CII), ubiquinol-cytochrome c oxidoreductase (cytochrome b-c1 complex, complex III, CIII) and cytochrome c oxidase (complex IV, CIV), that cooperate to transfer electrons derived from NADH and succinate to molecular oxygen, creating an electrochemical gradient over the inner membrane that drives transmembrane transport and the ATP synthase. The cytochrome b-c1 complex catalyzes electron transfer from ubiquinol to cytochrome c, linking this redox reaction to translocation of protons across the mitochondrial inner membrane, with protons being carried across the membrane as hydrogens on the quinol. In the process called Q cycle, 2 protons are consumed from the matrix, 4 protons are released into the intermembrane space and 2 electrons are passed to cytochrome c. This chain is Cytochrome b-c1 complex subunit 6-2, mitochondrial (QCR6-2), found in Arabidopsis thaliana (Mouse-ear cress).